The chain runs to 257 residues: Hydroxyethylthiazole kinase (257 aa).

Methionine 49 is a substrate binding site. Residues arginine 124 and threonine 170 each contribute to the ATP site. Position 197 (glycine 197) interacts with substrate.

The protein belongs to the Thz kinase family. Mg(2+) is required as a cofactor.

The enzyme catalyses 5-(2-hydroxyethyl)-4-methylthiazole + ATP = 4-methyl-5-(2-phosphooxyethyl)-thiazole + ADP + H(+). The protein operates within cofactor biosynthesis; thiamine diphosphate biosynthesis; 4-methyl-5-(2-phosphoethyl)-thiazole from 5-(2-hydroxyethyl)-4-methylthiazole: step 1/1. In terms of biological role, catalyzes the phosphorylation of the hydroxyl group of 4-methyl-5-beta-hydroxyethylthiazole (THZ). In Klebsiella pneumoniae subsp. pneumoniae (strain ATCC 700721 / MGH 78578), this protein is Hydroxyethylthiazole kinase.